We begin with the raw amino-acid sequence, 96 residues long: Protein CLAVATA 3 (96 aa).

A signal peptide spans 1–21; it reads MDSKSFLLLLLLFCFLFLHDA. Positions 68-96 are disordered; it reads ELRTVPSGPDPLHHHVNPPRQPRNNFQLP. A hydroxyproline mark is found at proline 73 and proline 76. O-linked (Ara...) hydroxyproline glycosylation is present at proline 76.

It belongs to the CLV3/ESR signal peptide family. As to quaternary structure, interacts with the extracellular leucine-rich repeat region of CLV1. Interacts with CLV2. CLV3-derived CLE peptides interacts with a tetrameric complex made of two CLV2/CRN heterodimers. Post-translationally, the MCLV3 peptide contains two hydroxyprolines, but hydroxylation had no direct effect on MCLV3 activity. In terms of processing, the O-glycosylation (arabinosylation) of the hydroxyproline P-76 enhances binding affinity of the MCLV3 peptide for its receptor. In terms of tissue distribution, first detected in heart stage embryos in a patch of cells between the developing cotyledons. In vegetative and inflorescence meristems, expressed in a small cone of cells at the meristem apex.

The protein resides in the secreted. It localises to the extracellular space. Functionally, extracellular signal that regulates meristem maintenance. Acts with CLV1 as a ligand-receptor pair in a signal transduction pathway coordinating growth between adjacent meristematic regions and controlling the balance between meristem cell proliferation and differentiation. Its function is as follows. The secreted peptide MCLV3 activates a signal transduction cascade to restrict WUSCHEL (WUS) expression, inducing shoot and root meristem consumption as cells differentiated into other organs. This chain is Protein CLAVATA 3, found in Arabidopsis thaliana (Mouse-ear cress).